The following is a 106-amino-acid chain: Protein U4 (106 aa).

A helical transmembrane segment spans residues 5-25; sequence FFISIILFVVLLNPSLIINMV.

The protein belongs to the nanovirus U4 protein family.

The protein resides in the membrane. This chain is Protein U4 (DNA-U4), found in Cicer arietinum (Chickpea).